Here is a 553-residue protein sequence, read N- to C-terminus: Salicylyl-CoA synthase / salicylate adenylyltransferase (553 aa).

Residue Gly203 coordinates ATP. His246–Asn247 is a substrate binding site. ATP contacts are provided by Gly320, Val342, Asp426, Arg441, and Lys533. Lys533 is a binding site for substrate.

It belongs to the ATP-dependent AMP-binding enzyme family.

The catalysed reaction is salicylate + ATP + CoA = 2-hydroxybenzoyl-CoA + AMP + diphosphate. Involved in the degradation of salicylate via a pathway involving coenzyme A derivative. Catalyzes the conversion of salicylate to salicyloyl-CoA via the formation of a salicylate-adenylate intermediate. The substrate specificity is strong, since benzoate, 3-hydroxybenzoate, 4-hydroxybenzoate, gentisate, 2-aminobenzoate, aminobenzoate, salicylamide, salicylaldoxime and 2-hydroxyphenyl acetate cannot substitute for salicylate. This chain is Salicylyl-CoA synthase / salicylate adenylyltransferase, found in Streptomyces sp.